Consider the following 707-residue polypeptide: Matrix metalloproteinase-9 (707 aa).

Positions 1-19 are cleaved as a signal peptide; the sequence is MSPRQPLVLALLVLGCCSA. A propeptide spans 20-106 (activation peptide); the sequence is APRRRQPTLV…PRCGVPDVGK (87 aa). A glycan (N-linked (GlcNAc...) asparagine) is linked at Asn-88. The short motif at 97–104 is the Cysteine switch element; the sequence is PRCGVPDV. Cys-99 provides a ligand contact to Zn(2+). 2 N-linked (GlcNAc...) asparagine glycosylation sites follow: Asn-120 and Asn-127. The Ca(2+) site is built by Asp-131 and Asp-165. Zn(2+) is bound by residues His-175 and Asp-177. 4 residues coordinate Ca(2+): Asp-182, Gly-183, Asp-185, and Leu-187. Position 190 (His-190) interacts with Zn(2+). Gly-197, Gln-199, and Asp-201 together coordinate Ca(2+). His-203 contributes to the Zn(2+) binding site. Positions 205, 206, and 208 each coordinate Ca(2+). Fibronectin type-II domains lie at 225-273, 283-331, and 342-390; these read ADGA…FCPS, ADGK…FCPT, and SAGE…FCPD. 6 disulfides stabilise this stretch: Cys-230–Cys-256, Cys-244–Cys-271, Cys-288–Cys-314, Cys-302–Cys-329, Cys-347–Cys-373, and Cys-361–Cys-388. His-401 is a binding site for Zn(2+). Glu-402 is an active-site residue. Residues His-405 and His-411 each contribute to the Zn(2+) site. The interval 437-508 is disordered; the sequence is RGIQHLYGPN…ASPSAAPTAS (72 aa). Residues 446 to 467 show a composition bias toward pro residues; that stretch reads NPNPQPPATTTPEPQPTAPPTA. A compositionally biased stretch (low complexity) spans 481–493; that stretch reads PTTSPTGAPSAGP. An intrachain disulfide couples Cys-516 to Cys-704. Hemopexin repeat units follow at residues 518-563, 564-608, 610-657, and 658-704; these read VNVF…WPAL, PAKL…GLGP, VPHV…FPGV, and PLNT…ILHC.

It belongs to the peptidase M10A family. As to quaternary structure, exists as monomer or homodimer; disulfide-linked. Also exists as heterodimer with LCN2. Macrophages and transformed cell lines produce only the monomeric form. Interacts with ECM1. It depends on Zn(2+) as a cofactor. The cofactor is Ca(2+). N- and O-glycosylated. As to expression, osteoclasts.

The protein localises to the secreted. The protein resides in the extracellular space. It localises to the extracellular matrix. It catalyses the reaction Cleavage of gelatin types I and V and collagen types IV and V.. Functionally, matrix metalloproteinase that plays an essential role in local proteolysis of the extracellular matrix and in leukocyte migration. Could play a role in bone osteoclastic resorption. Cleaves KiSS1 at a Gly-|-Leu bond. Cleaves NINJ1 to generate the Secreted ninjurin-1 form. Cleaves type IV and type V collagen into large C-terminal three quarter fragments and shorter N-terminal one quarter fragments. Degrades fibronectin but not laminin or Pz-peptide. The polypeptide is Matrix metalloproteinase-9 (Oryctolagus cuniculus (Rabbit)).